The primary structure comprises 695 residues: Elongation factor G (695 aa).

The region spanning 12 to 286 is the tr-type G domain; sequence DKLRNIGIMA…AVIDYLPSPL (275 aa). GTP-binding positions include 21–28, 85–89, and 139–142; these read AHIDAGKT, DTPGH, and NKMD.

It belongs to the TRAFAC class translation factor GTPase superfamily. Classic translation factor GTPase family. EF-G/EF-2 subfamily.

The protein localises to the cytoplasm. Functionally, catalyzes the GTP-dependent ribosomal translocation step during translation elongation. During this step, the ribosome changes from the pre-translocational (PRE) to the post-translocational (POST) state as the newly formed A-site-bound peptidyl-tRNA and P-site-bound deacylated tRNA move to the P and E sites, respectively. Catalyzes the coordinated movement of the two tRNA molecules, the mRNA and conformational changes in the ribosome. The sequence is that of Elongation factor G from Thermotoga sp. (strain RQ2).